A 410-amino-acid polypeptide reads, in one-letter code: Metacaspase-1 (410 aa).

Residues 1-94 (MFPGSGRQTY…RQSGAMNDVS (94 aa)) are disordered. 2 stretches are compositionally biased toward low complexity: residues 21-47 (APQY…YNGP) and 55-64 (NYNYGHYGPP). Over residues 65 to 75 (QGQGQGYGQGG) the composition is skewed to gly residues. Residues 80-94 (MYNNNRQSGAMNDVS) show a composition bias toward polar residues. Residues histidine 200 and cysteine 256 contribute to the active site.

It belongs to the peptidase C14B family.

Functionally, involved in cell death (apoptosis). This chain is Metacaspase-1 (MCA1), found in Meyerozyma guilliermondii (strain ATCC 6260 / CBS 566 / DSM 6381 / JCM 1539 / NBRC 10279 / NRRL Y-324) (Yeast).